A 205-amino-acid chain; its full sequence is Small ribosomal subunit protein uS4 (205 aa).

A disordered region spans residues 19-45 (IWGRSKSPVNRREYGPGQHGQRRKGKL). An S4 RNA-binding domain is found at 94–157 (RRLDAVVYRA…KQMALVLEAV (64 aa)).

The protein belongs to the universal ribosomal protein uS4 family. As to quaternary structure, part of the 30S ribosomal subunit. Contacts protein S5. The interaction surface between S4 and S5 is involved in control of translational fidelity.

In terms of biological role, one of the primary rRNA binding proteins, it binds directly to 16S rRNA where it nucleates assembly of the body of the 30S subunit. Functionally, with S5 and S12 plays an important role in translational accuracy. This chain is Small ribosomal subunit protein uS4, found in Azorhizobium caulinodans (strain ATCC 43989 / DSM 5975 / JCM 20966 / LMG 6465 / NBRC 14845 / NCIMB 13405 / ORS 571).